Consider the following 114-residue polypeptide: rRNA-processing protein cgrA (114 aa).

Residues 1–96 (MSASESAPSA…YDKMAEKMHR (96 aa)) are disordered. Residues 40 to 101 (AKRLEARKHQ…EKMHRKRVER (62 aa)) adopt a coiled-coil conformation. Residues 41–93 (KRLEARKHQEAVKEHERELKEEKEAERQAHIQRIKDRRAAKEEKERYDKMAEK) show a composition bias toward basic and acidic residues.

The protein belongs to the CGR1 family.

Its subcellular location is the nucleus. The protein localises to the nucleolus. Functionally, involved in nucleolar integrity and required for processing of the pre-rRNA for the 60S ribosome subunit. In Aspergillus terreus (strain NIH 2624 / FGSC A1156), this protein is rRNA-processing protein cgrA (cgrA).